We begin with the raw amino-acid sequence, 263 residues long: Inner membrane protein YpjD (263 aa).

Residues 1–3 (MPV) lie on the Periplasmic side of the membrane. The helical transmembrane segment at 4 to 23 (FALLALVAYSVSLALIVPGL) threads the bilayer. Residues 24–34 (LQKNGGWRRMA) are Cytoplasmic-facing. The chain crosses the membrane as a helical span at residues 35-54 (IISAVIALVCHAIALEARIL). Topologically, residues 55–63 (PDGDSGQNL) are periplasmic. A helical transmembrane segment spans residues 64-83 (SLLNVGSLVSLMICTVMTIV). At 84–89 (ASRNRG) the chain is on the cytoplasmic side. The chain crosses the membrane as a helical span at residues 90–109 (WLLLPIVYAFALINLALATF). Residues 110 to 123 (MPNEYITHLEATPG) lie on the Periplasmic side of the membrane. Residues 124–146 (MLVHIGLSLFSYATLIIAALYAL) traverse the membrane as a helical segment. The Cytoplasmic segment spans residues 147 to 181 (QLAWIDYQLKNKKLAFNQEMPPLMSIERKMFHITQ). Residues 182 to 201 (IGVVLLTLTLCTGLFYMHNL) traverse the membrane as a helical segment. The Periplasmic portion of the chain corresponds to 202-210 (FSMENIDKA). Residues 211 to 228 (VLSIVAWFVYIVLLWGHY) form a helical membrane-spanning segment. Residues 229 to 236 (HEGWRGRR) are Cytoplasmic-facing. Residues 237–259 (VVWFNVAGAVILTLAYFGSRIVQ) form a helical membrane-spanning segment. Residues 260-263 (QLIS) are Periplasmic-facing.

The protein localises to the cell inner membrane. This chain is Inner membrane protein YpjD (ypjD), found in Escherichia coli O157:H7.